Here is a 181-residue protein sequence, read N- to C-terminus: MATVNGYTGNTPAATTPAATGSKQSAPPTKTVDSHSVLKRLQSELMGLMMGADPGISAFPEEDNIFCWKGTITGSKDTVFEGTEYRLSLTFSNDYPFKSPKVKFETCCFHPNVDLYGNICLDILQDKWSSAYDVRTILLSIQSLLGEPNISSPLNNQAAQLWSNQEEYRKMVEKLYKPLNA.

The span at 1 to 10 (MATVNGYTGN) shows a compositional bias: polar residues. Residues 1 to 33 (MATVNGYTGNTPAATTPAATGSKQSAPPTKTVD) form a disordered region. Over residues 11–20 (TPAATTPAAT) the composition is skewed to low complexity. The UBC core domain occupies 36-181 (SVLKRLQSEL…VEKLYKPLNA (146 aa)). Cys-120 serves as the catalytic Glycyl thioester intermediate.

The protein belongs to the ubiquitin-conjugating enzyme family. As to quaternary structure, interacts with OR. Binds to LOT1. In terms of tissue distribution, expressed in all tissues with cell division activities and in mature leaves.

Its subcellular location is the cytoplasm. The protein localises to the nucleus. It catalyses the reaction S-ubiquitinyl-[E1 ubiquitin-activating enzyme]-L-cysteine + [E2 ubiquitin-conjugating enzyme]-L-cysteine = [E1 ubiquitin-activating enzyme]-L-cysteine + S-ubiquitinyl-[E2 ubiquitin-conjugating enzyme]-L-cysteine.. It functions in the pathway protein modification; protein ubiquitination. Accepts the ubiquitin from the E1 complex and catalyzes its covalent attachment to other proteins. Part of the anaphase-promoting complex (APC). May have a key function during cell cycle and be involved in cyclin B1 degradation. Triggers OR ubiquitination that mediates its subsequent nuclear localization. Involved in the repression of early light-induced proteins (ELIPs, e.g. ELIP1 and ELIP2) expression, probably via OR nuclear relocalization. The protein is Ubiquitin-conjugating enzyme E2 19 of Arabidopsis thaliana (Mouse-ear cress).